Here is a 205-residue protein sequence, read N- to C-terminus: Small ribosomal subunit protein uS4 (205 aa).

The interval 18–45 (NIWGRPKSPVNRREYGPGQHGQRRKGKL) is disordered. Residues 94–157 (RRLDTVVYRA…KQLAFVLEAS (64 aa)) form the S4 RNA-binding domain.

This sequence belongs to the universal ribosomal protein uS4 family. As to quaternary structure, part of the 30S ribosomal subunit. Contacts protein S5. The interaction surface between S4 and S5 is involved in control of translational fidelity.

Its function is as follows. One of the primary rRNA binding proteins, it binds directly to 16S rRNA where it nucleates assembly of the body of the 30S subunit. In terms of biological role, with S5 and S12 plays an important role in translational accuracy. This is Small ribosomal subunit protein uS4 from Rhodopseudomonas palustris (strain BisA53).